Consider the following 150-residue polypeptide: 2-aminobenzenesulfonate 2,3-dioxygenase subunit beta (150 aa).

The protein belongs to the bacterial ring-hydroxylating dioxygenase beta subunit family. In terms of assembly, heterotetramer with a alpha2beta2 structure.

It catalyses the reaction 2-aminobenzenesulfonate + NADH + O2 + 2 H(+) = 2,3-dihydroxybenzenesulfonate + NH4(+) + NAD(+). Inhibited by o-phenanthroline. Beta subunit of the oxygenase component of the 2-aminobenzenesulfonate 2,3-dioxygenase system (deaminating) (ABSDOS). Can use 2-aminobenzenesulfonate (ABS), benzenesulfonate (BS), 4-toluenesulfonate (TS), 2-nitrobenzenesulfonate, 3- and 4-aminobenzenesulfonates, 4-chloro- and 4-hydroxybenzenesulfonates and pyridine-3-sulfonate as substrates. No desulfonation of ABS to aminocatechol or aminophenol detected. The protein is 2-aminobenzenesulfonate 2,3-dioxygenase subunit beta of Alcaligenes sp.